A 264-amino-acid polypeptide reads, in one-letter code: Glutamate racemase (264 aa).

Substrate contacts are provided by residues 11 to 12 (DS) and 43 to 44 (YG). Catalysis depends on cysteine 74, which acts as the Proton donor/acceptor. 75–76 (NT) serves as a coordination point for substrate. The active-site Proton donor/acceptor is cysteine 193. Residue 194 to 195 (TH) coordinates substrate.

It belongs to the aspartate/glutamate racemases family.

The catalysed reaction is L-glutamate = D-glutamate. It functions in the pathway cell wall biogenesis; peptidoglycan biosynthesis. In terms of biological role, provides the (R)-glutamate required for cell wall biosynthesis. This Bifidobacterium longum (strain DJO10A) protein is Glutamate racemase.